A 76-amino-acid chain; its full sequence is MARGQQKIQSQQKNAKKQAEQKKKQGHDQKAAAKAALIYTCTVCRTQMPDPKTFKQHFESKHPKTPLPPELADVQA.

The segment covering 1–13 (MARGQQKIQSQQK) has biased composition (low complexity). 2 disordered regions span residues 1–32 (MARG…QKAA) and 53–76 (TFKQ…DVQA). 2 stretches are compositionally biased toward basic and acidic residues: residues 17–31 (KQAE…DQKA) and 53–62 (TFKQHFESKH). Residues 39–62 (YTCTVCRTQMPDPKTFKQHFESKH) form a C2H2-type zinc finger.

It localises to the cytoplasm. Its subcellular location is the nucleus. Its function is as follows. Transcription repressor involved in the exit of embryonic stem cells (ESCs) from self-renewal. The polypeptide is Zinc finger protein 706 (Gallus gallus (Chicken)).